The primary structure comprises 181 residues: ATP synthase subunit delta (181 aa).

It belongs to the ATPase delta chain family. As to quaternary structure, F-type ATPases have 2 components, F(1) - the catalytic core - and F(0) - the membrane proton channel. F(1) has five subunits: alpha(3), beta(3), gamma(1), delta(1), epsilon(1). F(0) has three main subunits: a(1), b(2) and c(10-14). The alpha and beta chains form an alternating ring which encloses part of the gamma chain. F(1) is attached to F(0) by a central stalk formed by the gamma and epsilon chains, while a peripheral stalk is formed by the delta and b chains.

The protein resides in the cell membrane. F(1)F(0) ATP synthase produces ATP from ADP in the presence of a proton or sodium gradient. F-type ATPases consist of two structural domains, F(1) containing the extramembraneous catalytic core and F(0) containing the membrane proton channel, linked together by a central stalk and a peripheral stalk. During catalysis, ATP synthesis in the catalytic domain of F(1) is coupled via a rotary mechanism of the central stalk subunits to proton translocation. In terms of biological role, this protein is part of the stalk that links CF(0) to CF(1). It either transmits conformational changes from CF(0) to CF(1) or is implicated in proton conduction. This chain is ATP synthase subunit delta, found in Shouchella clausii (strain KSM-K16) (Alkalihalobacillus clausii).